The following is a 380-amino-acid chain: DNA primase small subunit PriS (380 aa).

Residues aspartate 101, aspartate 103, and aspartate 282 contribute to the active site.

It belongs to the eukaryotic-type primase small subunit family. Heterodimer of a small subunit (PriS) and a large subunit (PriL). Mg(2+) is required as a cofactor. It depends on Mn(2+) as a cofactor.

Catalytic subunit of DNA primase, an RNA polymerase that catalyzes the synthesis of short RNA molecules used as primers for DNA polymerase during DNA replication. The small subunit contains the primase catalytic core and has DNA synthesis activity on its own. Binding to the large subunit stabilizes and modulates the activity, increasing the rate of DNA synthesis while decreasing the length of the DNA fragments, and conferring RNA synthesis capability. The DNA polymerase activity may enable DNA primase to also catalyze primer extension after primer synthesis. May also play a role in DNA repair. The chain is DNA primase small subunit PriS from Hyperthermus butylicus (strain DSM 5456 / JCM 9403 / PLM1-5).